Here is a 295-residue protein sequence, read N- to C-terminus: Ethanolamine ammonia-lyase small subunit (295 aa).

The adenosylcob(III)alamin site is built by valine 207, glutamate 228, and cysteine 258.

Belongs to the EutC family. In terms of assembly, the basic unit is a heterodimer which dimerizes to form tetramers. The heterotetramers trimerize; 6 large subunits form a core ring with 6 small subunits projecting outwards. Adenosylcob(III)alamin serves as cofactor.

The protein resides in the bacterial microcompartment. The catalysed reaction is ethanolamine = acetaldehyde + NH4(+). It participates in amine and polyamine degradation; ethanolamine degradation. Its function is as follows. Catalyzes the deamination of various vicinal amino-alcohols to oxo compounds. Allows this organism to utilize ethanolamine as the sole source of nitrogen and carbon in the presence of external vitamin B12. The protein is Ethanolamine ammonia-lyase small subunit of Escherichia fergusonii (strain ATCC 35469 / DSM 13698 / CCUG 18766 / IAM 14443 / JCM 21226 / LMG 7866 / NBRC 102419 / NCTC 12128 / CDC 0568-73).